The chain runs to 566 residues: MTARGAAGRCPSSTWMGSRLLLVCLLVSRSVAEVSEHCSHMIGNGHLQILQQLIDSQMETACLIEYKFVDQEQLDDPVCYLKKAFVLVQVIIEETMRFKDNTPNANATERLQELSMKLNSCFIKDYKEQNEACVQTYKESPLRLLEKIKNFFNETKNFLEKDWNIFSKNCNDSFAKCSSRDVVTKPDCNCLYPKATPSSDLASASPHQPPAPSMAPLADLAWDDSQRTEGSSLLPSDLPLRIEDPGSAKQRPPRSTCQTLESTEQPNHEDPQPHPSAGAPIPGVEDIIESSMGTNWVLEEASGEASEGFLTQERKFSPSNPVGGSIQAETDRPWARSASSPFPKLTEDQQPTNITDTPLTEVNPMRPTGQTLNNTPEKTDGSSTLREDQQEPRSPHFATLNPQRVGNSATPYAKLLPPKSHSWGIVLPLGELEGKKSTRDRRSPAELKGGPASEGAARPVAQSTRDRRSPAELKGGPASEGAARPVARFNSIPLTDTGSSIQDPQTSAFVFWVLGIILVLLAVGGLLFYSWKRRSHRDPRTLDSSVGRPEGSSLAQDEDRQVELPV.

The signal sequence occupies residues 1-32 (MTARGAAGRCPSSTWMGSRLLLVCLLVSRSVA). At 33–508 (EVSEHCSHMI…SSIQDPQTSA (476 aa)) the chain is on the extracellular side. Asn-106, Asn-153, and Asn-171 each carry an N-linked (GlcNAc...) asparagine glycan. Disordered regions lie at residues 197 to 417 (PSSD…KLLP) and 434 to 484 (GKKS…GAAR). Residues 253–265 (PRSTCQTLESTEQ) are compositionally biased toward polar residues. The O-linked (Xyl...) (chondroitin sulfate) serine glycan is linked to Ser-302. Positions 348 to 360 (DQQPTNITDTPLT) are enriched in polar residues. Residue Asn-353 is glycosylated (N-linked (GlcNAc...) asparagine). Thr-355 and Thr-357 each carry an O-linked (GalNAc...) threonine glycan. Residues 377–394 (EKTDGSSTLREDQQEPRS) show a composition bias toward basic and acidic residues. Residues 400–410 (LNPQRVGNSAT) are compositionally biased toward polar residues. Positions 434–445 (GKKSTRDRRSPA) are enriched in basic and acidic residues. A helical membrane pass occupies residues 509 to 531 (FVFWVLGIILVLLAVGGLLFYSW). At 532-566 (KRRSHRDPRTLDSSVGRPEGSSLAQDEDRQVELPV) the chain is on the cytoplasmic side. The tract at residues 538–566 (DPRTLDSSVGRPEGSSLAQDEDRQVELPV) is disordered. The segment covering 557–566 (DEDRQVELPV) has biased composition (basic and acidic residues).

Homodimer or heterodimer; disulfide-linked. Likely to exist in multiple forms: homodimer consisting of 2 identical 150-200 kDa proteoglycan subunits, heterodimer consisting of a 150-200 kDa proteoglycan subunit and a truncated 43 kDa subunit, and a homodimer consisting of 2 identical 43 kDa subunits. Interacts with CSF1R. N-glycosylated. Post-translationally, O-glycosylated; contains chondroitin sulfate.

The protein resides in the cell membrane. Its subcellular location is the secreted. It is found in the extracellular space. Functionally, cytokine that plays an essential role in the regulation of survival, proliferation and differentiation of hematopoietic precursor cells, especially mononuclear phagocytes, such as macrophages and monocytes. Promotes the release of pro-inflammatory chemokines, and thereby plays an important role in innate immunity and in inflammatory processes. Plays an important role in the regulation of osteoclast proliferation and differentiation, the regulation of bone resorption, and is required for normal bone development. Required for normal male and female fertility. Promotes reorganization of the actin cytoskeleton, regulates formation of membrane ruffles, cell adhesion and cell migration. Plays a role in lipoprotein clearance. The protein is Macrophage colony-stimulating factor 1 (Csf1) of Rattus norvegicus (Rat).